A 553-amino-acid chain; its full sequence is Formate--tetrahydrofolate ligase (553 aa).

63-70 (TPAGEGKS) provides a ligand contact to ATP.

This sequence belongs to the formate--tetrahydrofolate ligase family.

It carries out the reaction (6S)-5,6,7,8-tetrahydrofolate + formate + ATP = (6R)-10-formyltetrahydrofolate + ADP + phosphate. It participates in one-carbon metabolism; tetrahydrofolate interconversion. The protein is Formate--tetrahydrofolate ligase of Limosilactobacillus fermentum (strain NBRC 3956 / LMG 18251) (Lactobacillus fermentum).